The sequence spans 837 residues: AdoMet-dependent rRNA methyltransferase SPB1 (837 aa).

S-adenosyl-L-methionine-binding residues include Gly58, Trp60, Asp78, Asp94, and Asp119. Residue Lys159 is the Proton acceptor of the active site. Residues 345–390 (LNEEEQIEKELRDLQEKQKQKQKREKRRKNEEKQKELTRMQMNMLT) adopt a coiled-coil conformation. 4 disordered regions span residues 359–381 (QEKQ…QKEL), 483–529 (FRAK…DEDD), 573–644 (TDDV…TTKE), and 779–808 (TKKQ…KGIK). Basic and acidic residues predominate over residues 372-381 (RKNEEKQKEL). Residues 518 to 529 (ESDDSELSDEDD) show a composition bias toward acidic residues. The segment covering 593–602 (SYNEMKKEDL) has biased composition (basic and acidic residues). Residues 603–635 (SDSSDEDSSSESDFEIVANDESDGDIDSDYDSD) are compositionally biased toward acidic residues.

Belongs to the class I-like SAM-binding methyltransferase superfamily. RNA methyltransferase RlmE family. SPB1 subfamily. In terms of assembly, component of the nucleolar and nucleoplasmic pre-60S ribosomal particle.

The protein localises to the nucleus. It localises to the nucleolus. It carries out the reaction a ribonucleotide in rRNA + S-adenosyl-L-methionine = a 2'-O-methylribonucleotide in rRNA + S-adenosyl-L-homocysteine + H(+). Functionally, required for proper assembly of pre-ribosomal particles during the biogenesis of the 60S ribosomal subunit. The chain is AdoMet-dependent rRNA methyltransferase SPB1 from Candida glabrata (strain ATCC 2001 / BCRC 20586 / JCM 3761 / NBRC 0622 / NRRL Y-65 / CBS 138) (Yeast).